The chain runs to 579 residues: Nuclear hormone receptor family member nhr-71 (579 aa).

The segment at residues 8-83 (SQECMVCSAP…AGMKIGAVQP (76 aa)) is a DNA-binding region (nuclear receptor). NR C4-type zinc fingers lie at residues 11–31 (CMVC…CRSC) and 47–71 (CKHT…FTKC). Disordered stretches follow at residues 82–124 (QPRR…SDGP) and 168–189 (EPIP…PNDD). 2 stretches are compositionally biased toward polar residues: residues 106–124 (SMNN…SDGP) and 171–186 (PSTS…QSSP). The NR LBD domain occupies 189-452 (DEQQEFNHLV…KFWYETLCYA (264 aa)).

It belongs to the nuclear hormone receptor family.

The protein localises to the nucleus. Orphan nuclear receptor. The sequence is that of Nuclear hormone receptor family member nhr-71 (nhr-71) from Caenorhabditis elegans.